A 90-amino-acid polypeptide reads, in one-letter code: Small ribosomal subunit protein bS16 (90 aa).

Belongs to the bacterial ribosomal protein bS16 family.

This Geobacillus kaustophilus (strain HTA426) protein is Small ribosomal subunit protein bS16.